Here is a 102-residue protein sequence, read N- to C-terminus: Co-chaperonin GroES (102 aa).

This sequence belongs to the GroES chaperonin family. In terms of assembly, heptamer of 7 subunits arranged in a ring. Interacts with the chaperonin GroEL.

Its subcellular location is the cytoplasm. In terms of biological role, together with the chaperonin GroEL, plays an essential role in assisting protein folding. The GroEL-GroES system forms a nano-cage that allows encapsulation of the non-native substrate proteins and provides a physical environment optimized to promote and accelerate protein folding. GroES binds to the apical surface of the GroEL ring, thereby capping the opening of the GroEL channel. This is Co-chaperonin GroES from Streptomyces coelicolor (strain ATCC BAA-471 / A3(2) / M145).